Here is a 450-residue protein sequence, read N- to C-terminus: tRNA modification GTPase MnmE (450 aa).

(6S)-5-formyl-5,6,7,8-tetrahydrofolate contacts are provided by Arg23, Glu79, and Lys118. Residues 214–374 (GITLILVGKP…LKEHILNKVG (161 aa)) form the TrmE-type G domain. Position 224 (Asn224) interacts with K(+). GTP is bound by residues 224 to 229 (NAGKSS), 243 to 249 (TSIAGTT), and 268 to 271 (DTAG). Ser228 contacts Mg(2+). The K(+) site is built by Thr243, Ile245, and Thr248. Residue Thr249 participates in Mg(2+) binding. Lys450 contributes to the (6S)-5-formyl-5,6,7,8-tetrahydrofolate binding site.

It belongs to the TRAFAC class TrmE-Era-EngA-EngB-Septin-like GTPase superfamily. TrmE GTPase family. Homodimer. Heterotetramer of two MnmE and two MnmG subunits. It depends on K(+) as a cofactor.

It localises to the cytoplasm. Its function is as follows. Exhibits a very high intrinsic GTPase hydrolysis rate. Involved in the addition of a carboxymethylaminomethyl (cmnm) group at the wobble position (U34) of certain tRNAs, forming tRNA-cmnm(5)s(2)U34. In Francisella tularensis subsp. novicida (strain U112), this protein is tRNA modification GTPase MnmE.